A 273-amino-acid chain; its full sequence is Putative cysteine-rich repeat secretory protein 40 (273 aa).

The N-terminal stretch at 1–32 (MYPSCSLLQRLVWFPFLALVATQLLFIRNVSS) is a signal peptide. 2 consecutive Gnk2-homologous domains span residues 39–141 (YLHH…SISV) and 151–264 (YENN…LYPF).

It belongs to the cysteine-rich repeat secretory protein family.

It is found in the secreted. This Arabidopsis thaliana (Mouse-ear cress) protein is Putative cysteine-rich repeat secretory protein 40 (CRRSP40).